The chain runs to 611 residues: Chaperone protein DnaK (611 aa).

T173 is modified (phosphothreonine; by autocatalysis). Low complexity predominate over residues 579-592 (AAGQAEGAQGAQDA). Residues 579-611 (AAGQAEGAQGAQDAGAKKDNVVDAEFEEVKEDK) are disordered. Acidic residues predominate over residues 600 to 611 (VDAEFEEVKEDK).

It belongs to the heat shock protein 70 family.

Functionally, acts as a chaperone. In Bacillus mycoides (strain KBAB4) (Bacillus weihenstephanensis), this protein is Chaperone protein DnaK.